A 350-amino-acid polypeptide reads, in one-letter code: Xylene/toluene monooxygenase electron transfer component XylA (350 aa).

Residues 16 to 108 (PESTVSVRGQ…DLEIELDTVL (93 aa)) enclose the 2Fe-2S ferredoxin-type domain. Residues cysteine 52, cysteine 57, cysteine 60, and cysteine 92 each contribute to the [2Fe-2S] cluster site. Positions 109–350 (GQALVPIETS…ADRFYNRPPC (242 aa)) are ferredoxin--NADH reductase. Residues 114 to 213 (PIETSALISK…RAPYGQFGLH (100 aa)) form the FAD-binding FR-type domain.

This sequence belongs to the bacterial ring-hydroxylating dioxygenase ferredoxin reductase family. In terms of assembly, monomer. The xylene/toluene monooxygenase is composed of two subunits: the electron transfer component XylA and the hydroxylase component XylM. FAD is required as a cofactor. The cofactor is [2Fe-2S] cluster.

Its subcellular location is the cell inner membrane. The catalysed reaction is 2 reduced [2Fe-2S]-[ferredoxin] + NAD(+) + H(+) = 2 oxidized [2Fe-2S]-[ferredoxin] + NADH. The reductase activity is completely inhibited by quercetin (a common inhibitor of mammalian oxidoreductases) and p-chloromercuribenzoate, but not by iodoacetimide, N-ethylmaleimide and pyrrazole. Its function is as follows. Component of a monooxygenase that catalyzes the first step in the degradation of xylenes and toluenes. XylA is responsible for the transport of electrons from the electron donor NADH to the terminal hydroxylase component, XylM. The chain is Xylene/toluene monooxygenase electron transfer component XylA from Pseudomonas putida (Arthrobacter siderocapsulatus).